The sequence spans 138 residues: ATP synthase epsilon chain (138 aa).

This sequence belongs to the ATPase epsilon chain family. In terms of assembly, F-type ATPases have 2 components, CF(1) - the catalytic core - and CF(0) - the membrane proton channel. CF(1) has five subunits: alpha(3), beta(3), gamma(1), delta(1), epsilon(1). CF(0) has three main subunits: a, b and c.

Its subcellular location is the cell inner membrane. Functionally, produces ATP from ADP in the presence of a proton gradient across the membrane. This Idiomarina loihiensis (strain ATCC BAA-735 / DSM 15497 / L2-TR) protein is ATP synthase epsilon chain.